The following is a 1106-amino-acid chain: Protein kinase C (1106 aa).

Positions 1–67 (MDGDDLIASV…MRELQLRQMK (67 aa)) constitute an REM-1 1 domain. The disordered stretch occupies residues 65–138 (QMKQEGASPT…PRPFAPVPKA (74 aa)). Positions 79–93 (PPNPDGSAPVPPPKD) are enriched in pro residues. In terms of domain architecture, REM-1 2 spans 149–226 (KYDTPYLGPK…LKRYEDLHVD (78 aa)). Residues 232–350 (APDDESLSTP…MRRKKIESEF (119 aa)) form the C2 domain. Positions 361–370 (MEHGAAHGRQ) are enriched in basic and acidic residues. The segment at 361-400 (MEHGAAHGRQDAGGAPGSSNRPPSGGHSGGPGQGYAGGAP) is disordered. The span at 386–400 (GHSGGPGQGYAGGAP) shows a compositional bias: gly residues. 2 consecutive Phorbol-ester/DAG-type zinc fingers follow at residues 460–508 (GHKF…VTKC) and 528–578 (PHRF…PDFC). Composition is skewed to polar residues over residues 600-609 (KSASVSSGLS) and 658-668 (YIPPQSPTAAQ). Disordered stretches follow at residues 600–625 (KSAS…PQDN) and 658–719 (YIPP…HAHY). Positions 683–693 (AAAAAAAAAAA) are enriched in low complexity. The region spanning 781-1040 (FNFLAVLGKG…AQEVMSHAFF (260 aa)) is the Protein kinase domain. Residues 787-795 (LGKGNFGKV) and Lys810 contribute to the ATP site. The Proton acceptor role is filled by Asp906. The AGC-kinase C-terminal domain occupies 1041–1106 (RNINWDDIYH…RGFSYTADFA (66 aa)). The residue at position 1082 (Thr1082) is a Phosphothreonine. Ser1100 is subject to Phosphoserine. Position 1101 is a phosphotyrosine (Tyr1101).

It belongs to the protein kinase superfamily. AGC Ser/Thr protein kinase family. PKC subfamily. As to quaternary structure, interacts with hsp90.

The enzyme catalyses L-seryl-[protein] + ATP = O-phospho-L-seryl-[protein] + ADP + H(+). It catalyses the reaction L-threonyl-[protein] + ATP = O-phospho-L-threonyl-[protein] + ADP + H(+). Protein kinase C; part of cell wall integrity (CWI) signaling pathway composed of pkcA, the bck1-mkk2-mpka MAPK cascade and the downstream rlmA transcription regulator. The CWI signaling pathway regulates cell wall integrity and pyomelanin formation. CWI also controls oxidative stress response, gliotoxin production, iron adaptation and asexual development. Finally, CWI is constitutively required for A.fumigatus to cope with the temperature increase found in the mammalian lung environment, during infection. Modulates the expression of fumiquinazoline cluster during conidiogenesis. In Aspergillus fumigatus (strain ATCC MYA-4609 / CBS 101355 / FGSC A1100 / Af293) (Neosartorya fumigata), this protein is Protein kinase C.